A 301-amino-acid polypeptide reads, in one-letter code: UBX domain-containing protein 2 (301 aa).

Residues 1 to 61 (MSRNIRTFRD…AARGPDSEAH (61 aa)) are disordered. The SEP domain occupies 89-153 (TISLTLHLWS…KVNRHHEEYV (65 aa)). Residues 176–200 (GQSSSSATTAGTSSATTDHNPDHTA) form a disordered region. Residues 178-192 (SSSSATTAGTSSATT) are compositionally biased toward low complexity. Residues 218 to 295 (MNEPTTNIQI…NVLNSVVAVK (78 aa)) enclose the UBX domain.

Belongs to the NSFL1C family. In terms of assembly, interacts with cdc-48.1 (via N-terminus) and cdc-48.2 (via N-terminus). Interacts with kinase air-1. As to expression, expressed in the germline (at protein level). Expressed in spermatocytes but not in mature sperm (at protein level). Ubiquitously expressed. Predominantly expressed in the spermatheca.

The protein localises to the cytoplasm. It is found in the perinuclear region. The protein resides in the nucleus. Its subcellular location is the cytoskeleton. It localises to the microtubule organizing center. The protein localises to the centrosome. Ubiquitin-binding protein which acts as an adapter for ATPase cdc-48.1 and/or cdc-48.2, conferring substrate specificity. Together with ubxn-2 and ubxn-3, plays a role in hermaphrodite spermatogenesis probably by promoting the degradation of sex determination terminal factor tra-1. Probably in association with ATPase cdc-48.1 or/and cdc-48.2, regulates the centrosomal levels of kinase air-1 levels during mitotic progression by promoting air-1 removal from centrosomes in prophase. Also, regulates spindle orientation in the one-cell embryo by controlling centration and rotation of the pronuclei-centrosome complex in prophase. The polypeptide is UBX domain-containing protein 2 (Caenorhabditis elegans).